The following is a 211-amino-acid chain: Ferritin heavy chain (211 aa).

The N-terminal stretch at 1 to 20 (MKAVLFAVAALLAVCIPISA) is a signal peptide. One can recognise a Ferritin-like diiron domain in the interval 35 to 191 (ITMQQSCRGS…GKASTLKKML (157 aa)). A disulfide bridge connects residues C41 and C150. Residues E52, E87, H90, E136, and Q173 each contribute to the Fe cation site.

It belongs to the ferritin family. In terms of assembly, oligomer of 12 light (L) chains and 12 heavy (H) chains; L and H chains are disulfide-linked. The functional molecule forms a roughly spherical shell with a diameter of 12 nm and contains a central cavity into which the insoluble ferric iron core is deposited.

It is found in the golgi apparatus. Its subcellular location is the secreted. The enzyme catalyses 4 Fe(2+) + O2 + 4 H(+) = 4 Fe(3+) + 2 H2O. In terms of biological role, stores iron in a soluble, non-toxic, readily available form. Important for iron homeostasis. Iron is taken up in the ferrous form and deposited as ferric hydroxides after oxidation. Ferritin is composed of a heavy (H) chain which is responsible for the oxidation and uptake of ferrous iron, and a light (L) chain which facilitates the nucleation of the ferrihydrite iron core. The protein is Ferritin heavy chain of Papilio xuthus (Asian swallowtail butterfly).